A 505-amino-acid chain; its full sequence is Midnolin (505 aa).

A Ubiquitin-like domain is found at 32–106 (MSLAIHSTTG…LTLVPTVEAG (75 aa)). 3 disordered regions span residues 155–176 (PWHR…VSDF), 228–305 (SIAT…SRKP), and 440–485 (RLRR…GLDF). Over residues 238–262 (RPVSSAARVPPVSSSPSSPVSPSPV) the composition is skewed to low complexity. Over residues 263–282 (TAGTFQSHAASTTCPEQTDC) the composition is skewed to polar residues. A compositionally biased stretch (low complexity) spans 283 to 300 (SPPASSNTTSTPGSSPTP).

As to quaternary structure, interacts with GCK; the interaction occurs preferentially at low glucose levels. Interacts with the proteasome.

It localises to the nucleus. It is found in the cytoplasm. The protein localises to the cytosol. The protein resides in the nucleolus. Facilitates the ubiquitin-independent proteasomal degradation of stimulus-induced transcription factors such as FOSB, EGR1, NR4A1, and IRF4 to the proteasome for degradation. Promotes also the degradation of other substrates such as CBX4. Plays a role in inhibiting the activity of glucokinase GCK and both glucose-induced and basal insulin secretion. In Rattus norvegicus (Rat), this protein is Midnolin.